Here is a 201-residue protein sequence, read N- to C-terminus: IDLSRF-like peptide (201 aa).

The N-terminal stretch at 1–28 (MVRRFCNGAVALGIALTACAAFPRAIMA) is a signal peptide. The propeptide occupies 43-201 (SDACHPYEPF…EKLVKTGFLD (159 aa)). Positions 45-85 (ACHPYEPFKCPGDGLCISIQYLCDGAPDCQDGYDEDSRLCT) constitute an LDL-receptor class A domain. 3 cysteine pairs are disulfide-bonded: Cys46–Cys60, Cys54–Cys73, and Cys67–Cys84.

Expressed in central brain, antennal and optical lobes, in gnathal, thoracic and abdominal ganglia and in the retrocerebral complex (at protein level).

Its subcellular location is the secreted. In Camponotus floridanus (Florida carpenter ant), this protein is IDLSRF-like peptide.